The sequence spans 536 residues: Lysosomal acid glucosylceramidase (536 aa).

A signal peptide spans 1–39 (MEFSSPSREECPKPLSRVSIMAGSLTGLLLLQAVSWASG). 2 disulfide bridges follow: Cys-43-Cys-55 and Cys-57-Cys-62. Residues Asn-58, Asn-98, and Asn-185 are each glycosylated (N-linked (GlcNAc...) asparagine). The active-site Proton donor is Glu-274. N-linked (GlcNAc...) asparagine glycosylation occurs at Asn-309. Glu-379 functions as the Nucleophile in the catalytic mechanism. Asn-501 carries an N-linked (GlcNAc...) asparagine glycan.

Belongs to the glycosyl hydrolase 30 family. As to quaternary structure, interacts with saposin-C. Interacts with SCARB2. Interacts with TCP1. May interacts with SNCA; this interaction may inhibit the glucosylceramidase activity. Interacts with GRN; this interaction prevents aggregation of GBA1-SCARB2 complex via interaction with HSPA1A upon stress.

The protein localises to the lysosome membrane. The enzyme catalyses a beta-D-glucosyl-(1&lt;-&gt;1')-N-acylsphing-4-enine + H2O = an N-acylsphing-4-enine + D-glucose. The catalysed reaction is a beta-D-galactosyl-(1&lt;-&gt;1')-N-acylsphing-4-enine + H2O = an N-acylsphing-4-enine + D-galactose. It carries out the reaction cholesteryl 3-beta-D-glucoside + H2O = cholesterol + D-glucose. It catalyses the reaction a beta-D-glucosyl-(1&lt;-&gt;1')-N-acylsphing-4-enine + cholesterol = cholesteryl 3-beta-D-glucoside + an N-acylsphing-4-enine. The enzyme catalyses beta-D-glucosyl-N-(9Z-octadecenoyl)-sphing-4E-enine + cholesterol = N-(9Z-octadecenoyl)-sphing-4-enine + cholesteryl 3-beta-D-glucoside. The catalysed reaction is beta-D-glucosyl-(1&lt;-&gt;1')-N-hexadecanoylsphing-4-enine + cholesterol = cholesteryl 3-beta-D-glucoside + N-hexadecanoylsphing-4-enine. It carries out the reaction beta-D-glucosyl-N-octanoylsphing-4E-enine + cholesterol = N-octanoylsphing-4-enine + cholesteryl 3-beta-D-glucoside. It catalyses the reaction beta-D-glucosyl-N-dodecanoylsphing-4-enine + cholesterol = N-dodecanoylsphing-4-enine + cholesteryl 3-beta-D-glucoside. The enzyme catalyses beta-D-glucosyl-(1&lt;-&gt;1)-N-octadecanoylsphing-4-enine + cholesterol = N-octadecanoylsphing-4-enine + cholesteryl 3-beta-D-glucoside. The catalysed reaction is beta-D-glucosyl-(1&lt;-&gt;1')-N-(15Z-tetracosenoyl)-sphing-4-enine + cholesterol = N-(15Z-tetracosenoyl)-sphing-4-enine + cholesteryl 3-beta-D-glucoside. It carries out the reaction a beta-D-galactosyl-(1&lt;-&gt;1')-N-acylsphing-4-enine + cholesterol = cholesteryl 3-beta-D-galactoside + an N-acylsphing-4-enine. It catalyses the reaction 1-(beta-D-galactosyl)-N-dodecanoylsphing-4-enine + cholesterol = cholesteryl 3-beta-D-galactoside + N-dodecanoylsphing-4-enine. The enzyme catalyses a beta-D-xylosyl-(1&lt;-&gt;1')-N-acylsphing-4-enine + cholesterol = cholesteryl 3-beta-D-xyloside + an N-acylsphing-4-enine. The catalysed reaction is beta-D-xylosyl-(1&lt;-&gt;1')-N-(9Z-octadecenoyl)-sphing-4-enine + cholesterol = cholesteryl 3-beta-D-xyloside + N-(9Z-octadecenoyl)-sphing-4-enine. Its pathway is steroid metabolism; cholesterol metabolism. It functions in the pathway sphingolipid metabolism. Its activity is regulated as follows. Synergistically activated by saposin-A and saposin-C, two saposin peptides produced by proteolytic processing of prosaposin/PSAP. Saposin-C activates GBA1 through its recruitment to membranes. The membrane structure and composition in anionic phospholipids are also important for the activation. Activated by PKC in the salvage pathway of ceramide formation. Inhibited by conduritol B epoxide/CBE. Functionally, glucosylceramidase that catalyzes, within the lysosomal compartment, the hydrolysis of glucosylceramides/GlcCers (such as beta-D-glucosyl-(1&lt;-&gt;1')-N-acylsphing-4-enine) into free ceramides (such as N-acylsphing-4-enine) and glucose. Plays a central role in the degradation of complex lipids and the turnover of cellular membranes. Through the production of ceramides, participates in the PKC-activated salvage pathway of ceramide formation. Catalyzes the glucosylation of cholesterol, through a transglucosylation reaction where glucose is transferred from GlcCer to cholesterol. GlcCer containing mono-unsaturated fatty acids (such as beta-D-glucosyl-N-(9Z-octadecenoyl)-sphing-4-enine) are preferred as glucose donors for cholesterol glucosylation when compared with GlcCer containing same chain length of saturated fatty acids (such as beta-D-glucosyl-N-octadecanoyl-sphing-4-enine). Under specific conditions, may alternatively catalyze the reverse reaction, transferring glucose from cholesteryl 3-beta-D-glucoside to ceramide. Can also hydrolyze cholesteryl 3-beta-D-glucoside producing glucose and cholesterol. Catalyzes the hydrolysis of galactosylceramides/GalCers (such as beta-D-galactosyl-(1&lt;-&gt;1')-N-acylsphing-4-enine), as well as the transfer of galactose between GalCers and cholesterol in vitro, but with lower activity than with GlcCers. Contrary to GlcCer and GalCer, xylosylceramide/XylCer (such as beta-D-xyosyl-(1&lt;-&gt;1')-N-acylsphing-4-enine) is not a good substrate for hydrolysis, however it is a good xylose donor for transxylosylation activity to form cholesteryl 3-beta-D-xyloside. The sequence is that of Lysosomal acid glucosylceramidase from Homo sapiens (Human).